The following is a 24-amino-acid chain: Brevinin-1E (24 aa).

Cys-18 and Cys-24 are joined by a disulfide.

Expressed by the skin glands.

It localises to the secreted. Functionally, antimicrobial peptide. Stimulates insulin release by BRIN-BD11 cells in vitro. This is Brevinin-1E from Pelophylax saharicus (Sahara frog).